A 229-amino-acid polypeptide reads, in one-letter code: Somatolactin (229 aa).

Residues 1 to 24 (MHLVSVIQRGVWAVLLWPNLLASS) form the signal peptide. 3 disulfide bridges follow: Cys-29–Cys-39, Cys-87–Cys-203, and Cys-220–Cys-228. Residues Asn-143 and Asn-175 are each glycosylated (N-linked (GlcNAc...) asparagine).

Belongs to the somatotropin/prolactin family.

It localises to the secreted. This chain is Somatolactin, found in Cyclopterus lumpus (Lumpsucker).